A 418-amino-acid polypeptide reads, in one-letter code: tRNA-2-methylthio-N(6)-dimethylallyladenosine synthase (418 aa).

An MTTase N-terminal domain is found at 1–118 (MNYLIETIGC…ALKIMNLFRT (118 aa)). [4Fe-4S] cluster contacts are provided by C10, C46, C80, C143, C147, and C150. The region spanning 129–356 (IKSKIVRYIT…LKESNKISIE (228 aa)) is the Radical SAM core domain. Residues 359 to 418 (SEMLGSTQQVLAEEIKNGIIKARTKNGRKVFAEGRKEYIGKHINVNIKEAKINSLFGDIV) enclose the TRAM domain.

The protein belongs to the methylthiotransferase family. MiaB subfamily. In terms of assembly, monomer. The cofactor is [4Fe-4S] cluster.

Its subcellular location is the cytoplasm. The enzyme catalyses N(6)-dimethylallyladenosine(37) in tRNA + (sulfur carrier)-SH + AH2 + 2 S-adenosyl-L-methionine = 2-methylsulfanyl-N(6)-dimethylallyladenosine(37) in tRNA + (sulfur carrier)-H + 5'-deoxyadenosine + L-methionine + A + S-adenosyl-L-homocysteine + 2 H(+). In terms of biological role, catalyzes the methylthiolation of N6-(dimethylallyl)adenosine (i(6)A), leading to the formation of 2-methylthio-N6-(dimethylallyl)adenosine (ms(2)i(6)A) at position 37 in tRNAs that read codons beginning with uridine. In Endomicrobium trichonymphae, this protein is tRNA-2-methylthio-N(6)-dimethylallyladenosine synthase.